Here is a 299-residue protein sequence, read N- to C-terminus: MKIAILSTDPSLYSTRKLLEAGEQRGHEVYVIDYLRCYMKITSMKTEVIYMGKSLKGFDAIIPRIGASKTFYGTAVVRQFEMMGVFTANPSLAISRSRDKLHCLQLLAREGIELPVTSFAHFTKDINSLINTVGGAPLVIKLLEGSQGIGVVLAETYQVAKSVIEAFSGLNANFLVQEFIEEAGGADVRCFVVGDRVIAAIKRQGTEGEFRSNLHQGGTAKKIKLTPQERSIAMRSAKAIGLKVAGVDLLRSDHGPVVMEVNSSPGLEGIETATGVDVSGKIIEFLEKNLGKGPLGDRL.

The ATP-grasp domain occupies 104 to 287 (LQLLAREGIE…VSGKIIEFLE (184 aa)). ATP contacts are provided by residues Lys-141, 178 to 179 (EF), Asp-187, and 211 to 213 (RSN). Residues Asp-248, Glu-260, and Asn-262 each contribute to the Mg(2+) site. 3 residues coordinate Mn(2+): Asp-248, Glu-260, and Asn-262.

This sequence belongs to the RimK family. The cofactor is Mg(2+). Mn(2+) serves as cofactor.

This chain is Probable alpha-L-glutamate ligase, found in Trichodesmium erythraeum (strain IMS101).